The primary structure comprises 394 residues: Endothelial cell-selective adhesion molecule (394 aa).

Positions 1–29 are cleaved as a signal peptide; it reads MILPARTPETSLLRVLFLGLSTLAAFSLA. The Extracellular portion of the chain corresponds to 30–251; sequence QMELHVPPGL…LDVMTGSKAA (222 aa). The region spanning 37–146 is the Ig-like V-type domain; it reads PGLNKLEAVE…DGKNIGHSIK (110 aa). Residues asparagine 111, asparagine 172, asparagine 216, and asparagine 239 are each glycosylated (N-linked (GlcNAc...) asparagine). The 88-residue stretch at 156-243 folds into the Ig-like C2-type domain; the sequence is PAPPSCSFQG…GFAQCNVTLD (88 aa). Cysteine 177 and cysteine 227 form a disulfide bridge. A helical transmembrane segment spans residues 252–272; that stretch reads VVAGAVVGTFVGLVLIAGLVL. Topologically, residues 273-394 are cytoplasmic; that stretch reads LYQRRSKTLE…PAQSQAGSLV (122 aa). The disordered stretch occupies residues 300–372; that stretch reads WTKGSDTISK…SLTPGGVSSS (73 aa). 2 stretches are compositionally biased toward polar residues: residues 303-318 and 335-347; these read GSDTISKNGTLSSVTS and FTPTPSVSSQALS. Serine 304 carries the phosphoserine modification. Phosphothreonine is present on residues threonine 336 and threonine 338. Residues serine 340, serine 343, and serine 348 each carry the phosphoserine modification.

Interacts with MAGI1.

It is found in the cell junction. Its subcellular location is the adherens junction. The protein resides in the tight junction. It localises to the cell membrane. Functionally, can mediate aggregation most likely through a homophilic molecular interaction. This is Endothelial cell-selective adhesion molecule (Esam) from Rattus norvegicus (Rat).